The chain runs to 491 residues: 2-aminomuconic 6-semialdehyde dehydrogenase (491 aa).

Active-site residues include glutamate 252 and cysteine 286.

It belongs to the aldehyde dehydrogenase family. Homotrimer.

The catalysed reaction is 2-aminomuconate 6-semialdehyde + NAD(+) + H2O = (2Z,4E)-2-aminomuconate + NADH + 2 H(+). Strongly inhibited by Ag(+) and Hg(+), and comnpletely inhibited by p-chloromercuribenzoic acid. Involved in the modified meta-cleavage pathway for 2-aminophenol catabolism. The enzyme is also active toward 2-hydroxymuconic 6-semialdehyde, acetaldehyde, propionaldehyde, and butyraldehyde. This Pseudomonas sp protein is 2-aminomuconic 6-semialdehyde dehydrogenase (amnC).